The primary structure comprises 314 residues: GDSL-like esterase Rv1075c (314 aa).

The first 21 residues, 1 to 21, serve as a signal peptide directing secretion; the sequence is MPRRSTIALATAGALASTGTA. Catalysis depends on serine 80, which acts as the Nucleophile. The Proton donor role is filled by aspartate 244. Catalysis depends on histidine 247, which acts as the Proton acceptor. The segment at 276–314 is disordered; sequence IHETPSRPGTATLEPGHTRHSMMSRLRRPRPARAVPTGG. The segment covering 293 to 306 has biased composition (basic residues); it reads TRHSMMSRLRRPRP.

It belongs to the 'GDSL' lipolytic enzyme family.

The catalysed reaction is an acetyl ester + H2O = an aliphatic alcohol + acetate + H(+). The enzyme catalyses a butanoate ester + H2O = an aliphatic alcohol + butanoate + H(+). It catalyses the reaction triacetin + H2O = diacetylglycerol + acetate + H(+). It carries out the reaction 1,2,3-tributanoylglycerol + H2O = dibutanoylglycerol + butanoate + H(+). With respect to regulation, esterase activity is significantly inhibited by the serine modifier phenylmethylsulfonyl fluoride (PMSF). Completely inhibited by diethyl pyrocarbonate. Its function is as follows. Esterase that preferentially hydrolyzes short-chain fatty acids, particularly pNP-acetate (C2) and pNP-butyrate (C4). Also has weak activity with pNP-hexanoate (C6) and pNP-octanoate (C8). It can also hydrolyze short-chain tryglycerides such as triacetin and tributyrin. Important for intracellular survival. The polypeptide is GDSL-like esterase Rv1075c (Mycobacterium tuberculosis (strain ATCC 25618 / H37Rv)).